Consider the following 66-residue polypeptide: Protein translocase subunit SecE (66 aa).

The chain crosses the membrane as a helical span at residues 29 to 49 (LIASTLVVVAAVFIFSLICLV).

The protein belongs to the SecE/SEC61-gamma family. Component of the Sec protein translocase complex. Heterotrimer consisting of SecY, SecE and SecG subunits. The heterotrimers can form oligomers, although 1 heterotrimer is thought to be able to translocate proteins. Interacts with the ribosome. Interacts with SecDF, and other proteins may be involved. Interacts with SecA.

The protein localises to the cell inner membrane. In terms of biological role, essential subunit of the Sec protein translocation channel SecYEG. Clamps together the 2 halves of SecY. May contact the channel plug during translocation. This Rickettsia typhi (strain ATCC VR-144 / Wilmington) protein is Protein translocase subunit SecE.